The following is a 109-amino-acid chain: Nucleoid-associated protein VV1_2004 (109 aa).

The protein belongs to the YbaB/EbfC family. In terms of assembly, homodimer.

It is found in the cytoplasm. It localises to the nucleoid. Functionally, binds to DNA and alters its conformation. May be involved in regulation of gene expression, nucleoid organization and DNA protection. In Vibrio vulnificus (strain CMCP6), this protein is Nucleoid-associated protein VV1_2004.